A 209-amino-acid polypeptide reads, in one-letter code: MSGKKRTASSTRWMQEHFDDHYVKLSQKRGLRSRAAFKIEEIQQKDKLIRPGMTVVDLGAAPGGWSQIAVKLAGETGKVIACDILPMDPIVGVDFLQGDFREEKVLNALLERVGDAKVDVVLSDMAPNMSGTGGVDQPRAMYLVELALDMCHQVLAPNGSFAVKVFQGEGFDEYMKAVREAFTTVKTRKPDSSRPRSREVYLVATGYKL.

S-adenosyl-L-methionine is bound by residues G63, W65, D83, D99, and D124. K164 (proton acceptor) is an active-site residue.

Belongs to the class I-like SAM-binding methyltransferase superfamily. RNA methyltransferase RlmE family.

It localises to the cytoplasm. The enzyme catalyses uridine(2552) in 23S rRNA + S-adenosyl-L-methionine = 2'-O-methyluridine(2552) in 23S rRNA + S-adenosyl-L-homocysteine + H(+). Its function is as follows. Specifically methylates the uridine in position 2552 of 23S rRNA at the 2'-O position of the ribose in the fully assembled 50S ribosomal subunit. This is Ribosomal RNA large subunit methyltransferase E from Shewanella loihica (strain ATCC BAA-1088 / PV-4).